The sequence spans 352 residues: Ubiquitin thioesterase otulin (352 aa).

The interval 1–48 (MSRGTMPQPEAWPGASCAETPAREAAATARDGGKAAASGQPRPEMQCP) is disordered. Residues 18 to 37 (AETPAREAAATARDGGKAAA) are compositionally biased toward low complexity. Positions 52 to 57 (EEDMYR) match the PIM motif motif. Residue Tyr56 is modified to Phosphotyrosine. Linear diubiquitin binding stretches follow at residues 95 to 96 (EW) and 124 to 126 (RGD). The region spanning 118–346 (TSIRRVRGDN…DRHYNIPVRV (229 aa)) is the OTU domain. The active site involves Asp126. The active-site Nucleophile is the Cys129. 3 linear diubiquitin binding regions span residues 255–259 (FFSVL), 283–289 (TGGLEQV), and 336–338 (DDR). The active site involves His339.

This sequence belongs to the peptidase C65 family. Otulin subfamily. As to quaternary structure, interacts (via the PUB domain) with RNF31 (via the PIM motif); the interaction is direct. Interacts with DVL2. In terms of processing, ubiquitinated. Acetylated. Post-translationally, phosphorylated. Phosphorylation at Tyr-56 prevents interaction with RNF31; dephosphorylation promotes interaction with RNF31 and the LUBAC complex.

The protein resides in the cytoplasm. The enzyme catalyses Thiol-dependent hydrolysis of ester, thioester, amide, peptide and isopeptide bonds formed by the C-terminal Gly of ubiquitin (a 76-residue protein attached to proteins as an intracellular targeting signal).. Functionally, deubiquitinase that specifically removes linear ('Met-1'-linked) polyubiquitin chains to substrates and acts as a regulator of angiogenesis and innate immune response. Required during angiogenesis, craniofacial and neuronal development by regulating the canonical Wnt signaling together with the LUBAC complex. Acts as a negative regulator of NF-kappa-B by regulating the activity of the LUBAC complex. OTULIN function is mainly restricted to homeostasis of the LUBAC complex: acts by removing 'Met-1'-linked autoubiquitination of the LUBAC complex, thereby preventing inactivation of the LUBAC complex. Acts as a key negative regulator of inflammation by restricting spontaneous inflammation and maintaining immune homeostasis. In myeloid cell, required to prevent unwarranted secretion of cytokines leading to inflammation and autoimmunity by restricting linear polyubiquitin formation. Plays a role in innate immune response by restricting linear polyubiquitin formation on LUBAC complex in response to NOD2 stimulation, probably to limit NOD2-dependent pro-inflammatory signaling. In Homo sapiens (Human), this protein is Ubiquitin thioesterase otulin.